The chain runs to 1038 residues: Subtilisin-like protease SBT6.1 (1038 aa).

The N-terminal stretch at 1-30 is a signal peptide; the sequence is MKVLGEASSYPYRSCIIVVFLSVSLFWLRP. A propeptide spans 31–181 (removed in mature form); the sequence is STYHPQQQNL…TTLNWSRHLL (151 aa). Asn44, Asn52, Asn171, and Asn175 each carry an N-linked (GlcNAc...) asparagine glycan. Residues 175-473 enclose the Peptidase S8 domain; that stretch reads NWSRHLLAQK…VDLLESYEIL (299 aa). Over 182–1000 the chain is Lumenal; sequence AQKTQVTSMF…IDMPFLVPTR (819 aa). The active-site Charge relay system is Asp212. Asn230 carries an N-linked (GlcNAc...) asparagine glycan. Residue His243 is the Charge relay system of the active site. Asn300 carries N-linked (GlcNAc...) asparagine glycosylation. Ser409 functions as the Charge relay system in the catalytic mechanism. Residues Asn513, Asn579, Asn902, and Asn954 are each glycosylated (N-linked (GlcNAc...) asparagine). A helical transmembrane segment spans residues 1001 to 1021; it reads WIVLAGVVASGVLVLLSIWRI. Over 1022–1038 the chain is Cytoplasmic; sequence RQKRGRRRRASGSNRLA.

This sequence belongs to the peptidase S8 family. As to quaternary structure, interacts with PME1 and PME5. As to expression, expressed in the vasculature of roots, cotyledons and leaves.

Its subcellular location is the golgi apparatus membrane. Functionally, serine protease that catalyzes the first step (site-1 cleavage) in the proteolytic activation of various factors, prior to site-2 cleavage. Part of a regulated intramembrane proteolysis (RIP) cascade. Cleaves BZIP17 and BZIP28 after the Arg-Arg-Ile-Leu (RRIL) motif. May cleave BZIP49 after the RRIL motif. Targets the membrane-associated BZIP17 factor, which functions as a stress sensor and transducer in a signaling pathway that resembles an ER stress response. Following salt stress, BZIP17 is cleaved by SBT6.1 (S1P) and S2P at the C-terminus and the N-terminal bZIP component is translocated to the nucleus, where it activates the expression of salt stress response genes. Cleaves the pectinesterases PME1 after the Arg-Arg-Leu-Met (RRLM) and Arg-Arg-Leu-Leu (RRLL) motifs, and PME5 after the Arg-Arg-Leu-Leu (RRLL) and Arg-Lys-Leu-Met (RKLM) motifs. This processing and C-terminus release occurs in the Golgi apparatus and is required for cell wall targeting of pectinesterases. Thus, SBT6.1 mediates the regulated release of mature pectinesterases from the Golgi. Cleaves the peptide growth factor RALF23 after the Arg-Arg-Ile-Leu (RRIL) motif. This processing is required for RALF23 function in the negative regulation of brassinolide (BL)-mediated signaling pathway (e.g. BL-induced hypocotyl elongation and branching limitation). The sequence is that of Subtilisin-like protease SBT6.1 from Arabidopsis thaliana (Mouse-ear cress).